A 135-amino-acid polypeptide reads, in one-letter code: Fatty acid-binding protein homolog 6 (135 aa).

Residues arginine 110 and arginine 130 to tyrosine 132 each bind a fatty acid.

The protein belongs to the calycin superfamily. Fatty-acid binding protein (FABP) family.

The sequence is that of Fatty acid-binding protein homolog 6 (lbp-6) from Caenorhabditis elegans.